The chain runs to 593 residues: MEEHTQGSHVEAGIVEHPNAEDFGHARTLPTDTNWFKHAVFYEVLVRAFYDSNADGIGDLRGLTEKLDYIKWLGVDCLWLPPFYDSPLRDGGYDIRDFYKVLPEFGTVDDFVTLLDAAHRRGIRIITDLVMNHTSDQHEWFQESRHNPDGPYGDFYVWSDTSDRYPDARIIFVDTEESNWTFDPVRRQFYWHRFFSHQPDLNYDNPAVQEAMLDVLRFWLDLGIDGFRLDAVPYLFEREGTNCENLPETHAFLKRCRKAIDDEYPGRVLLAEANQWPADVVAYFGDPDTGGDECHMAFHFPLMPRIFMAVRRESRFPISEILAQTPPIPDTAQWGIFLRNHDELTLEMVTDEERDYMYAEYAKDPRMKANVGIRRRLAPLLENDRNQIELFTALLLSLPGSPVLYYGDEIGMGDIIWLGDRDSVRTPMQWTPDRNAGFSKATPGRLYLPPNQDAVYGYHSVNVEAQLDSSSSLLNWTRNMLAVRSRHDAFAVGTFRELGGSNPSVLAYIREVTRQQGDGGAKTDAVLCVNNLSRFPQPIELNLQQWAGYIPVEMTGYVEFPSIGQLPYLLTLPGHGFYWFQLREPDPEPGAQQ.

Position 90 (Asp-90) interacts with substrate. Asn-132 provides a ligand contact to Ca(2+). Residues His-133 and Gln-198 each coordinate substrate. Ca(2+) is bound at residue Asp-200. A substrate-binding site is contributed by Arg-228. Asp-230 serves as the catalytic Nucleophile. Residues Tyr-234, Leu-235, and Glu-237 each contribute to the Ca(2+) site. Catalysis depends on Glu-272, which acts as the Proton donor. 2 residues coordinate substrate: His-341 and Asp-342.

This sequence belongs to the glycosyl hydrolase 13 family. TreS subfamily. As to quaternary structure, homohexamer.

It catalyses the reaction D-maltose = alpha,alpha-trehalose. The catalysed reaction is Endohydrolysis of (1-&gt;4)-alpha-D-glucosidic linkages in polysaccharides containing three or more (1-&gt;4)-alpha-linked D-glucose units.. It participates in glycan biosynthesis; glycogen biosynthesis. Its activity is regulated as follows. The amylase activity is stimulated by addition of Ca(2+), but this cation and other divalent cations inhibit the trehalose synthase activity. In addition, trehalose synthase activity, but not amylase activity, is strongly inhibited, and in a competitive manner, by validoxylamine. On the other hand, amylase, but not trehalose synthase activity, is inhibited by the known transition-state amylase inhibitor, acarbose, suggesting the possibility of two different active sites. Other metal ions such as Mg(2+), Mn(2+), and Co(2+) are also somewhat effective in the stimulation of amylase activity, but Hg(2+), Cu(2+), Ni(2+) and Zn(2+) are inhibitory. In terms of biological role, catalyzes the reversible interconversion of maltose and trehalose by transglucosylation. Maltose is the preferred substrate. To a lesser extent, also displays amylase activity, catalyzing the endohydrolysis of (1-&gt;4)-alpha-D-glucosidic linkages in glycogen and maltooligosaccharides such as maltoheptaose, to produce maltose which then can be converted to trehalose. TreS plays a key role in the utilization of trehalose for the production of glycogen and alpha-glucan via the TreS-Pep2 branch involved in the biosynthesis of maltose-1-phosphate (M1P). Might also function as a sensor and/or regulator of trehalose levels within the cell. Thus, when trehalose levels in the cell become dangerously low, TreS can expedite the conversion of glycogen to maltose via its amylase activity and then convert the maltose to trehalose; but this enzyme also can expedite or promote the conversion of trehalose to glycogen when cytoplasmic trehalose levels become too high. Is also able to catalyze the hydrolytic cleavage of alpha-aryl glucosides, as well as alpha-glucosyl fluoride in vitro. This chain is Trehalose synthase/amylase TreS, found in Mycolicibacterium smegmatis (strain ATCC 700084 / mc(2)155) (Mycobacterium smegmatis).